Reading from the N-terminus, the 87-residue chain is Polyketide-8 synthase acyl carrier protein 2 (87 aa).

A Carrier domain is found at 8–83 (ALDKEQLREL…GTYELLTSKL (76 aa)). The residue at position 43 (Ser-43) is an O-(pantetheine 4'-phosphoryl)serine.

4'-phosphopantetheine is transferred from CoA to a specific serine of the apo-ACP-like protein.

Acyl carrier protein. This Streptomyces avermitilis (strain ATCC 31267 / DSM 46492 / JCM 5070 / NBRC 14893 / NCIMB 12804 / NRRL 8165 / MA-4680) protein is Polyketide-8 synthase acyl carrier protein 2.